The primary structure comprises 147 residues: Myoglobin (147 aa).

One can recognise a Globin domain in the interval 2 to 141; the sequence is ADFDMVLKCW…IITDMEADYK (140 aa). A nitrite-binding site is contributed by histidine 60. Histidine 60 serves as a coordination point for O2. Histidine 89 provides a ligand contact to heme b.

Belongs to the globin family. In terms of assembly, monomeric.

The protein localises to the cytoplasm. It localises to the sarcoplasm. The enzyme catalyses Fe(III)-heme b-[protein] + nitric oxide + H2O = Fe(II)-heme b-[protein] + nitrite + 2 H(+). It carries out the reaction H2O2 + AH2 = A + 2 H2O. In terms of biological role, monomeric heme protein which primary function is to store oxygen and facilitate its diffusion within muscle tissues. Reversibly binds oxygen through a pentacoordinated heme iron and enables its timely and efficient release as needed during periods of heightened demand. Depending on the oxidative conditions of tissues and cells, and in addition to its ability to bind oxygen, it also has a nitrite reductase activity whereby it regulates the production of bioactive nitric oxide. Under stress conditions, like hypoxia and anoxia, it also protects cells against reactive oxygen species thanks to its pseudoperoxidase activity. The protein is Myoglobin (mb) of Channichthys rhinoceratus (Unicorn icefish).